A 252-amino-acid chain; its full sequence is MAVPKKSTKERLESLLDDLEVLSREVIETLALSRSQKLSQPGEENQILELLIQKDGEFQELMKVAFSQGKTHQEMQVLEKEVEKRDSDIQQLQKQLKEAEHILATAVYQAKEKLKSIDKARKGVISSEELIKYAHRISASNAVCAPLTWVPGDPRRPYPTDLEMRSGLLGQMSNLPTNGVNGHLPGDALAAGRLPDVLAPQYPWQSSDMSMNMLPPNHSNEFLMESLGPNKENEEDVEVMSTDSSSSSSDSD.

2 coiled-coil regions span residues 5-31 (KKSTKERLESLLDDLEVLSREVIETLA) and 70-112 (KTHQ…QAKE). A disordered region spans residues 213–252 (MLPPNHSNEFLMESLGPNKENEEDVEVMSTDSSSSSSDSD). Positions 241 to 252 (STDSSSSSSDSD) are enriched in low complexity.

Belongs to the Mediator complex subunit 4 family. As to quaternary structure, component of the Mediator complex.

It localises to the nucleus. Component of the Mediator complex, a coactivator involved in the regulated transcription of nearly all RNA polymerase II-dependent genes. Mediator functions as a bridge to convey information from gene-specific regulatory proteins to the basal RNA polymerase II transcription machinery. Mediator is recruited to promoters by direct interactions with regulatory proteins and serves as a scaffold for the assembly of a functional preinitiation complex with RNA polymerase II and the general transcription factors. This is Mediator of RNA polymerase II transcription subunit 4 (med4) from Xenopus laevis (African clawed frog).